The sequence spans 900 residues: DNA polymerase nu (900 aa).

The span at 60–75 (LEDRKTQSPEKKDLKS) shows a compositional bias: basic and acidic residues. 2 disordered regions span residues 60-90 (LEDRKTQSPEKKDLKSLRSQTSRGSAKLSPQ) and 863-900 (GPPPGPCRTESPSNSLAAPGSPASTQPPPLHFSPSFCL). Over residues 76-90 (LRSQTSRGSAKLSPQ) the composition is skewed to polar residues.

Belongs to the DNA polymerase type-A family. As to quaternary structure, interacts with FANCD2, FANCI, PCNA, RAD51 and HELQ. As to expression, highly expressed in testis and heart. Weakly expressed in skeletal muscle.

It is found in the nucleus. The enzyme catalyses DNA(n) + a 2'-deoxyribonucleoside 5'-triphosphate = DNA(n+1) + diphosphate. With respect to regulation, inhibited by ddTTP. Its function is as follows. DNA polymerase with very low fidelity that catalyzes considerable misincorporation by inserting dTTP opposite a G template, and dGTP opposite a T template. Is the least accurate of the DNA polymerase A family (i.e. POLG, POLN and POLQ). Can perform accurate translesion DNA synthesis (TLS) past a 5S-thymine glycol. Can perform efficient strand displacement past a nick or a gap and gives rise to an amount of product similar to that on non-damaged template. Has no exonuclease activity. Error-prone DNA polymerase that preferentially misincorporates dT regardless of template sequence. May play a role in TLS during interstrand cross-link (ICL) repair. May be involved in TLS when genomic replication is blocked by extremely large major groove DNA lesions. May function in the bypass of some DNA-protein and DNA-DNA cross-links. May have a role in cellular tolerance to DNA cross-linking agents. Involved in the repair of DNA cross-links and double-strand break (DSB) resistance. Participates in FANCD2-mediated repair. Forms a complex with HELQ helicase that participates in homologous recombination (HR) repair and is essential for cellular protection against DNA cross-links. The chain is DNA polymerase nu (POLN) from Homo sapiens (Human).